A 289-amino-acid chain; its full sequence is MSAKARGYVALMKLRVVELLLITTVPVMMLAERGVPSLRLIAVTLVAGTLAAGSANTINCYVDRDIDQMMGRTKRRPLVRATVTPTEALTFGIVIGIVSTLLFGFLVNWPSALLADGAIAFYVFVYTLGLKRRTPSNIVIGGAAGCFPVLIGWSAVTGTVGWAAVLLFAVVFFWTPPHFWALAMKFRDDYAAAGVPMLPVVASVQVVTRRMLGYAYAMVAASLAVAPVASTGPVYLVAAVAVGAWFLVESHRVARRARHGEDPRPMRLFHMSITYLTLLFVAIAVTALV.

Helical transmembrane passes span 9–29, 40–60, 89–109, 110–130, 134–154, 155–175, 190–209, 228–248, and 269–289; these read VALMKLRVVELLLITTVPVMM, LIAVTLVAGTLAAGSANTINC, LTFGIVIGIVSTLLFGFLVNW, PSALLADGAIAFYVFVYTLGL, TPSNIVIGGAAGCFPVLIGWS, AVTGTVGWAAVLLFAVVFFWT, YAAAGVPMLPVVASVQVVTR, VASTGPVYLVAAVAVGAWFLV, and FHMSITYLTLLFVAIAVTALV.

Belongs to the UbiA prenyltransferase family. Protoheme IX farnesyltransferase subfamily.

It is found in the cell membrane. The catalysed reaction is heme b + (2E,6E)-farnesyl diphosphate + H2O = Fe(II)-heme o + diphosphate. It functions in the pathway porphyrin-containing compound metabolism; heme O biosynthesis; heme O from protoheme: step 1/1. Its function is as follows. Converts heme B (protoheme IX) to heme O by substitution of the vinyl group on carbon 2 of heme B porphyrin ring with a hydroxyethyl farnesyl side group. The sequence is that of Protoheme IX farnesyltransferase from Frankia casuarinae (strain DSM 45818 / CECT 9043 / HFP020203 / CcI3).